Consider the following 496-residue polypeptide: Cytochrome c-552 (496 aa).

The N-terminal stretch at Met1–Ala23 is a signal peptide. His100 contributes to the heme c binding site. Heme contacts are provided by Cys128, Cys131, and Lys132. Heme c is bound by residues Cys166, Cys169, His170, Cys210, Cys213, and His214. Residues Glu216, Tyr217, Lys269, and Gln271 each coordinate Ca(2+). Tyr217 lines the substrate pocket. His272 is a substrate binding site. Residues His283, Cys290, Cys293, His294, His308, Cys321, Cys324, His325, and His400 each contribute to the heme c site.

This sequence belongs to the cytochrome c-552 family. Ca(2+) serves as cofactor. Heme c is required as a cofactor.

Its subcellular location is the periplasm. It catalyses the reaction 6 Fe(III)-[cytochrome c] + NH4(+) + 2 H2O = 6 Fe(II)-[cytochrome c] + nitrite + 8 H(+). The protein operates within nitrogen metabolism; nitrate reduction (assimilation). Its function is as follows. Catalyzes the reduction of nitrite to ammonia, consuming six electrons in the process. This Aliarcobacter butzleri (strain RM4018) (Arcobacter butzleri) protein is Cytochrome c-552.